Consider the following 118-residue polypeptide: Putative pterin-4-alpha-carbinolamine dehydratase (118 aa).

It belongs to the pterin-4-alpha-carbinolamine dehydratase family.

The catalysed reaction is (4aS,6R)-4a-hydroxy-L-erythro-5,6,7,8-tetrahydrobiopterin = (6R)-L-erythro-6,7-dihydrobiopterin + H2O. In Pseudomonas fluorescens (strain SBW25), this protein is Putative pterin-4-alpha-carbinolamine dehydratase.